A 367-amino-acid chain; its full sequence is Developmentally-regulated GTP-binding protein 1 (367 aa).

N-acetylserine is present on S2. Residues 2–16 are required for interaction with STK16; it reads SSTLAKIAEIEAEMA. Position 22 is a (3S)-3-hydroxylysine (K22). Residues 65–290 enclose the OBG-type G domain; sequence ARIGFVGFPS…LLEKIWDYLK (226 aa). GTP contacts are provided by residues 71–78, 96–100, 117–120, 248–251, and 271–273; these read GFPSVGKS, FTTLT, DLPG, NKID, and SAH. Positions 78 and 98 each coordinate Mg(2+). The residue at position 100 (T100) is a Phosphothreonine; by STK16. The 77-residue stretch at 290–366 folds into the TGS domain; the sequence is KLVRIYTKPK…EDEDVIQIVK (77 aa).

The protein belongs to the TRAFAC class OBG-HflX-like GTPase superfamily. OBG GTPase family. As to quaternary structure, interacts (via its C-terminal) with TAL1. Interacts with DFRP1/ZC3H15; this interaction prevents DRG1 poly-ubiquitination and degradation by proteasome. DRG1-ZC3H15/DFRP1 complex co-sediments with polysomes. Interacts with STK16. Interacts with JMJD7. Post-translationally, sumoylated by UBE2I in response to MEKK1-mediated stimuli. Hydroxylated (with S stereochemistry) at C-3 of Lys-22 by JMJD7. In terms of processing, phosphorylated at Thr-100 by STK16. Post-translationally, polyubiquitinated; this modification induces proteolytic degradation and is impaired by interaction with ZC3H15.

It localises to the nucleus. The protein resides in the cytoplasm. It catalyses the reaction GTP + H2O = GDP + phosphate + H(+). With respect to regulation, the GTPase activity is enhanced by potassium ions as well as by DFRP1 binding. Catalyzes the conversion of GTP to GDP through hydrolysis of the gamma-phosphate bond in GTP. Appears to have an intrinsic GTPase activity that is stimulated by ZC3H15/DFRP1 binding likely by increasing the affinity for the potassium ions. When hydroxylated at C-3 of 'Lys-22' by JMJD7, may bind to RNA and play a role in translation. Binds to microtubules and promotes microtubule polymerization and bundling that are required for mitotic spindle assembly during prophase to anaphase transition. GTPase activity is not necessary for these microtubule-related functions. The sequence is that of Developmentally-regulated GTP-binding protein 1 (DRG1) from Bos taurus (Bovine).